Reading from the N-terminus, the 425-residue chain is Glutamate-1-semialdehyde 2,1-aminomutase (425 aa).

N6-(pyridoxal phosphate)lysine is present on Lys264.

This sequence belongs to the class-III pyridoxal-phosphate-dependent aminotransferase family. HemL subfamily. Homodimer. Requires pyridoxal 5'-phosphate as cofactor.

Its subcellular location is the cytoplasm. It catalyses the reaction (S)-4-amino-5-oxopentanoate = 5-aminolevulinate. The protein operates within porphyrin-containing compound metabolism; protoporphyrin-IX biosynthesis; 5-aminolevulinate from L-glutamyl-tRNA(Glu): step 2/2. This Campylobacter lari (strain RM2100 / D67 / ATCC BAA-1060) protein is Glutamate-1-semialdehyde 2,1-aminomutase.